The primary structure comprises 326 residues: Pyruvate dehydrogenase E1 component subunit beta (326 aa).

Residue Glu60 participates in thiamine diphosphate binding. K(+) is bound by residues Ile113, Ala161, Ile162, and Asn166.

In terms of assembly, heterodimer of an alpha and a beta chain. It depends on thiamine diphosphate as a cofactor.

The protein resides in the plastid. It localises to the chloroplast. The enzyme catalyses N(6)-[(R)-lipoyl]-L-lysyl-[protein] + pyruvate + H(+) = N(6)-[(R)-S(8)-acetyldihydrolipoyl]-L-lysyl-[protein] + CO2. The pyruvate dehydrogenase complex catalyzes the overall conversion of pyruvate to acetyl-CoA and CO(2). It contains multiple copies of three enzymatic components: pyruvate dehydrogenase (E1), dihydrolipoamide acetyltransferase (E2) and lipoamide dehydrogenase (E3). The polypeptide is Pyruvate dehydrogenase E1 component subunit beta (pdhB) (Chaetosphaeridium globosum (Charophycean green alga)).